We begin with the raw amino-acid sequence, 236 residues long: Small ribosomal subunit protein uS2c (236 aa).

Belongs to the universal ribosomal protein uS2 family.

Its subcellular location is the plastid. The protein resides in the chloroplast. This chain is Small ribosomal subunit protein uS2c (rps2), found in Amborella trichopoda.